Here is a 579-residue protein sequence, read N- to C-terminus: Protein downstream neighbor of son homolog (579 aa).

2 disordered regions span residues 1–68 (MAEL…RRNP) and 331–379 (FSQP…DESF). The span at 339 to 348 (DTGKKQKKPE) shows a compositional bias: basic and acidic residues. Residues 365-378 (EADEASDESDEDES) are compositionally biased toward acidic residues.

Belongs to the DONSON family. As to quaternary structure, component of the replisome complex.

The protein localises to the nucleus. Functionally, replisome component that maintains genome stability by protecting stalled or damaged replication forks. After the induction of replication stress, required for the stabilization of stalled replication forks, the efficient activation of the intra-S-phase and G/2M cell-cycle checkpoints and the maintenance of genome stability. In Xenopus laevis (African clawed frog), this protein is Protein downstream neighbor of son homolog.